A 140-amino-acid chain; its full sequence is 3-hydroxyacyl-[acyl-carrier-protein] dehydratase FabZ (140 aa).

Residue H46 is part of the active site.

This sequence belongs to the thioester dehydratase family. FabZ subfamily.

The protein localises to the cytoplasm. The catalysed reaction is a (3R)-hydroxyacyl-[ACP] = a (2E)-enoyl-[ACP] + H2O. Functionally, involved in unsaturated fatty acids biosynthesis. Catalyzes the dehydration of short chain beta-hydroxyacyl-ACPs and long chain saturated and unsaturated beta-hydroxyacyl-ACPs. In Pseudothermotoga lettingae (strain ATCC BAA-301 / DSM 14385 / NBRC 107922 / TMO) (Thermotoga lettingae), this protein is 3-hydroxyacyl-[acyl-carrier-protein] dehydratase FabZ.